Reading from the N-terminus, the 59-residue chain is MAVPKKKTSKSKRDMRRATWNRKAAAQAQRALSLGKSILTGQAKGFYYPTDEEEEQEES.

Residues Met-1 to Met-15 are compositionally biased toward basic residues. The disordered stretch occupies residues Met-1–Ala-26.

Belongs to the bacterial ribosomal protein bL32 family.

This Cyanothece sp. (strain PCC 7425 / ATCC 29141) protein is Large ribosomal subunit protein bL32.